The chain runs to 923 residues: Alanine--tRNA ligase (923 aa).

Zn(2+) contacts are provided by histidine 611, histidine 615, cysteine 714, and histidine 718. Residues valine 886–aspartate 903 show a composition bias toward gly residues. The disordered stretch occupies residues valine 886 to asparagine 909.

Belongs to the class-II aminoacyl-tRNA synthetase family. Requires Zn(2+) as cofactor.

Its subcellular location is the cytoplasm. It catalyses the reaction tRNA(Ala) + L-alanine + ATP = L-alanyl-tRNA(Ala) + AMP + diphosphate. Functionally, catalyzes the attachment of alanine to tRNA(Ala) in a two-step reaction: alanine is first activated by ATP to form Ala-AMP and then transferred to the acceptor end of tRNA(Ala). Also edits incorrectly charged Ser-tRNA(Ala) and Gly-tRNA(Ala) via its editing domain. The protein is Alanine--tRNA ligase of Methanococcoides burtonii (strain DSM 6242 / NBRC 107633 / OCM 468 / ACE-M).